The following is a 715-amino-acid chain: MSSLFVWLNRLAISAMQRSEVVGAAIVMSIVFMMIIPLPTGLIDVLIALNICISSLLIVLAMYLPKPLAFSTFPSVLLLTTMFRLALSISTTRQILLQQDAGHIVEAFGNFVVGGNLAVGLVIFLILTVVNFLVITKGSERVAEVAARFTLDAMPGKQMSIDSDLRAGLIEAHQARQRRENLAKESQLFGAMDGAMKFVKGDAIAGLVIVFINMIGGFAIGVLQNGMEAGAAMHIYSVLTIGDGLIAQIPALLISLTAGMIITRVSADGQQVDANIGREIAEQLTSQPKAWIMSAAGMLGFALLPGMPTAVFVIISAIALGSGLFQLWRIKQQDSQQQADELHAQQLAPEDNGYQDLRRFNPTRAYLLQFSQEHLNSEAAESLIQHIRRLRNRLVYHFGFTLPSFDIEFSPALAADEFRFCVYEIPLVTATFAVEQLAVRTSSIEIHLADGESDGQIQPGQAERDEHHWCWLPPQHPLLQQEDRRCWNAQQLIMLRMEQAIHQSGAQFIGLQESKSILNWLESEQPELAQELQRIMPLSRFAAVLQRLASERIPLRSVRTIAETLIEHGQHERDSAALTDFVRIALKEHICHQYQQPNGLNVWLLTPETEELLRDSLRQAQSETFFSLAQEYGINLLNQMRSAFPPYDNHHALILVAQDLRSPLRALLKDEFHAVPVLSFAELTSNVAINVLGRLDLQQSPPELQENDPCMNYAY.

Transmembrane regions (helical) follow at residues 23-43 (GAAIVMSIVFMMIIPLPTGLI), 45-65 (VLIALNICISSLLIVLAMYLP), 69-89 (AFSTFPSVLLLTTMFRLALSI), 115-135 (GNLAVGLVIFLILTVVNFLVI), 203-223 (AIAGLVIVFINMIGGFAIGVL), 241-261 (IGDGLIAQIPALLISLTAGMI), and 298-318 (MLGFALLPGMPTAVFVIISAI).

It belongs to the FHIPEP (flagella/HR/invasion proteins export pore) family.

The protein localises to the cell inner membrane. In terms of biological role, involved in the secretion of harpin; a proteinaceous elicitor of the hypersensitivity response in plants. The protein is Harpin secretion protein HrpI (hrpI) of Erwinia amylovora (Fire blight bacteria).